The following is a 144-amino-acid chain: D-aminoacyl-tRNA deacylase (144 aa).

The Gly-cisPro motif, important for rejection of L-amino acids motif lies at 136-137; the sequence is GP.

Belongs to the DTD family. As to quaternary structure, homodimer.

It localises to the cytoplasm. It carries out the reaction glycyl-tRNA(Ala) + H2O = tRNA(Ala) + glycine + H(+). The enzyme catalyses a D-aminoacyl-tRNA + H2O = a tRNA + a D-alpha-amino acid + H(+). Its function is as follows. An aminoacyl-tRNA editing enzyme that deacylates mischarged D-aminoacyl-tRNAs. Also deacylates mischarged glycyl-tRNA(Ala), protecting cells against glycine mischarging by AlaRS. Acts via tRNA-based rather than protein-based catalysis; rejects L-amino acids rather than detecting D-amino acids in the active site. By recycling D-aminoacyl-tRNA to D-amino acids and free tRNA molecules, this enzyme counteracts the toxicity associated with the formation of D-aminoacyl-tRNA entities in vivo and helps enforce protein L-homochirality. The polypeptide is D-aminoacyl-tRNA deacylase (Vibrio atlanticus (strain LGP32) (Vibrio splendidus (strain Mel32))).